Reading from the N-terminus, the 631-residue chain is tRNA uridine 5-carboxymethylaminomethyl modification enzyme MnmG (631 aa).

15-20 (GAGHAG) lines the FAD pocket. Residues 214–233 (YSKTEEEPGDKEPRHFSFTS) form a disordered region. An NAD(+)-binding site is contributed by 276 to 290 (GPRYCPSIETKVVRF).

The protein belongs to the MnmG family. As to quaternary structure, homodimer. Heterotetramer of two MnmE and two MnmG subunits. Requires FAD as cofactor.

The protein localises to the cytoplasm. Functionally, NAD-binding protein involved in the addition of a carboxymethylaminomethyl (cmnm) group at the wobble position (U34) of certain tRNAs, forming tRNA-cmnm(5)s(2)U34. The protein is tRNA uridine 5-carboxymethylaminomethyl modification enzyme MnmG of Lactobacillus delbrueckii subsp. bulgaricus (strain ATCC BAA-365 / Lb-18).